Reading from the N-terminus, the 514-residue chain is Inosine-5'-monophosphate dehydrogenase (514 aa).

2 consecutive CBS domains span residues 112–171 (FISK…DTPV) and 175–233 (MTRR…PHST). Residues 270–272 (DSS) and 320–322 (GMG) each bind NAD(+). K(+) contacts are provided by Gly-322 and Gly-324. Ser-325 is an IMP binding site. Cys-327 is a K(+) binding site. Cys-327 (thioimidate intermediate) is an active-site residue. IMP-binding positions include 360-362 (DGG), 383-384 (GG), and 407-411 (YRGMG). The active-site Proton acceptor is Arg-425. Gln-437 lines the IMP pocket. Residues Glu-496, Gly-497, and Gly-498 each contribute to the K(+) site. The Microbody targeting signal signature appears at 512 to 514 (AKM).

It belongs to the IMPDH/GMPR family. Heterotetramer. Interacts with glycosomal protein sorting receptor PEX5. The cofactor is K(+).

The protein resides in the glycosome. It carries out the reaction IMP + NAD(+) + H2O = XMP + NADH + H(+). It functions in the pathway purine metabolism; XMP biosynthesis via de novo pathway; XMP from IMP: step 1/1. Its activity is regulated as follows. Mycophenolic acid (MPA) is a non-competitive inhibitor that prevents formation of the closed enzyme conformation by binding to the same site as the amobile flap. In contrast, mizoribine monophosphate (MZP) is a competitive inhibitor that induces the closed conformation. MPA is a potent inhibitor of mammalian IMPDHs but a poor inhibitor of the bacterial enzymes. MZP is a more potent inhibitor of bacterial IMPDH. Potently inhibited by MPA. Inhibited by XMP and GMP. Catalyzes the conversion of inosine 5'-phosphate (IMP) to xanthosine 5'-phosphate (XMP), the first committed and rate-limiting step in the de novo synthesis of guanine nucleotides, and therefore plays an important role in the regulation of cell growth. This is Inosine-5'-monophosphate dehydrogenase from Leishmania donovani.